The sequence spans 144 residues: C-C motif chemokine 25 (144 aa).

An N-terminal signal peptide occupies residues 1–23; that stretch reads MKLWLFACLVACFVGAWMPVVHA. 2 disulfides stabilise this stretch: Cys-30-Cys-58 and Cys-31-Cys-73. The interval 98 to 144 is disordered; that stretch reads KSASDSQTERKKSNHMKSKVENPNSTSVRSATLGHPRMVMMPRKTNN. Positions 118–127 are enriched in polar residues; the sequence is ENPNSTSVRS.

Belongs to the intercrine beta (chemokine CC) family. Specifically expressed by thymic dendritic cells. High levels in thymus and small intestine.

It is found in the secreted. Its function is as follows. Potentially involved in T-cell development. Recombinant protein shows chemotactic activity on thymocytes, macrophages, THP-1 cells, and dendritics cells but is inactive on peripheral blood lymphocytes and neutrophils. Binds to CCR9. Binds to atypical chemokine receptor ACKR4 and mediates the recruitment of beta-arrestin (ARRB1/2) to ACKR4. The protein is C-C motif chemokine 25 (Ccl25) of Mus musculus (Mouse).